The following is a 329-amino-acid chain: MGMLRAGLCPGLTEETVQLLRGRKIKTVADLAAADLEEVAQKCGLSYKALVALRRVLLAQFSAFPLNGADLYEELKTSTAILSTGIGSLDKLLDAGLYTGEVTEIVGGPGSGKTQVCLCVAANVAHSLQQNVLYVDSNGGMTASRLLQLLQARTQDEEKQASALQRIQVVRSFDIFRMLDMLQDLRGTIAQQEATSSGAVKVVIVDSVTAVVAPLLGGQQREGLALMMQLARELKILARDLGVAVVVTNHLTRDWDGRRFKPALGRSWSFVPSTRILLDVTEGAGTLGSSQRTVCLTKSPRQPTGLQEMIDIGTLGTEEQSPELPGKQT.

The tract at residues 1 to 83 is preferentially binds ssDNA; that stretch reads MGMLRAGLCP…ELKTSTAILS (83 aa). Residues 4–77 form an interaction with XRCC2 region; sequence LRAGLCPGLT…GADLYEELKT (74 aa). The interaction with RAD51C stretch occupies residues 77–328; sequence TSTAILSTGI…EQSPELPGKQ (252 aa). 107-114 lines the ATP pocket; that stretch reads GGPGSGKT.

The protein belongs to the RecA family. RAD51 subfamily. As to quaternary structure, part of the BCDX2 complex consisting of RAD51B, RAD51C, RAD51D and XRCC2; the complex has a ring-like structure arranged into a flat disc around a central channel. In the absence of DNA, the BCDX2 subcomplex XRCC2:RAD51D formed a multimeric ring structure; in the presence of single-stranded DNA it formed a filamentous structure with the ssDNA. Interacts with SWSAP1 and ZSWIM7; involved in homologous recombination repair. Interacts with BLM; required for stimulation of BLM activity by the BCDX2 subcomplex XRCC2:RAD51D. Highly expressed in brain followed by testis. Also expressed in heart, liver, kidney, spleen, lung and skeletal muscle.

Its subcellular location is the nucleus. The protein resides in the chromosome. It localises to the telomere. Its function is as follows. Involved in the homologous recombination repair (HRR) pathway of double-stranded DNA breaks arising during DNA replication or induced by DNA-damaging agents. Bind to single-stranded DNA (ssDNA) and has DNA-dependent ATPase activity. Part of the RAD51 paralog protein complex BCDX2 which acts in the BRCA1-BRCA2-dependent HR pathway. Upon DNA damage, BCDX2 acts downstream of BRCA2 recruitment and upstream of RAD51 recruitment. BCDX2 binds predominantly to the intersection of the four duplex arms of the Holliday junction and to junction of replication forks. The BCDX2 complex was originally reported to bind single-stranded DNA, single-stranded gaps in duplex DNA and specifically to nicks in duplex DNA. Involved in telomere maintenance. The BCDX2 subcomplex XRCC2:RAD51D can stimulate Holliday junction resolution by BLM. In Mus musculus (Mouse), this protein is DNA repair protein RAD51 homolog 4 (Rad51d).